The sequence spans 165 residues: Large ribosomal subunit protein uL11 (165 aa).

It belongs to the universal ribosomal protein uL11 family.

Its function is as follows. Binds directly to 26S ribosomal RNA. This is Large ribosomal subunit protein uL11 (rpl-12) from Caenorhabditis briggsae.